A 238-amino-acid polypeptide reads, in one-letter code: Gas vesicle protein F (238 aa).

This sequence belongs to the gas vesicle GvpF/GvpL family. As to quaternary structure, binds GvpA.

Its subcellular location is the gas vesicle. A minor component of the gas vesicle, may be involved in preventing GvpA aggregation during gas vesicle nucleation. Gas vesicles are hollow, gas filled proteinaceous nanostructures found in some microorganisms. It is not clear what function gas vesicles perform in soil bacteria. This chain is Gas vesicle protein F, found in Streptomyces sp. (strain CB03234).